The primary structure comprises 200 residues: Fibrillarin-like rRNA/tRNA 2'-O-methyltransferase (200 aa).

S-adenosyl-L-methionine contacts are provided by residues 62–63 (TT), 78–79 (EF), 103–104 (DA), and 123–126 (DVAQ).

The protein belongs to the methyltransferase superfamily. Fibrillarin family. Interacts with nop5. Component of box C/D small ribonucleoprotein (sRNP) particles that contain rpl7ae, FlpA and nop5, plus a guide RNA.

Functionally, involved in pre-rRNA and tRNA processing. Utilizes the methyl donor S-adenosyl-L-methionine to catalyze the site-specific 2'-hydroxyl methylation of ribose moieties in rRNA and tRNA. Site specificity is provided by a guide RNA that base pairs with the substrate. Methylation occurs at a characteristic distance from the sequence involved in base pairing with the guide RNA. This chain is Fibrillarin-like rRNA/tRNA 2'-O-methyltransferase, found in Methanoculleus marisnigri (strain ATCC 35101 / DSM 1498 / JR1).